Reading from the N-terminus, the 343-residue chain is MTITPQEALQRTIEHREIFHDEMLHLMRLIMRGDLSPVMAAAIITGLRVKKETIGEIAAAATVMREFANHVEVQDNSNFVDIVGTGGDGSHTFNISTASMFVTAAAGAKVAKHGNRGVSSKSGSADVLEALGVNIDLQSDQVAASIAETGMGFMFAPNHHPAMKNIAAVRRELGVRTIFNILGPLTNPAGAPNQLMGVFHADLVGIQVRVMQRLGAQHVLVVYGKDGMDEVSLGAATLVGELRDGKVHEYEIHPEDFGLQMVSNRTLKVENADESRTMLLGALDNQPGVAREIVTLNAGTALYAANVAESIADGIQLAREAIASGKARAKVDELVRFTQQFKR.

Residues G84, 87-88 (GD), T92, 94-97 (NIST), 112-120 (KHGNRGVSS), and S124 contribute to the 5-phospho-alpha-D-ribose 1-diphosphate site. Anthranilate is bound at residue G84. Residue S96 participates in Mg(2+) binding. An anthranilate-binding site is contributed by N115. R170 provides a ligand contact to anthranilate. Mg(2+) contacts are provided by D229 and E230.

Belongs to the anthranilate phosphoribosyltransferase family. In terms of assembly, homodimer. Mg(2+) is required as a cofactor.

The catalysed reaction is N-(5-phospho-beta-D-ribosyl)anthranilate + diphosphate = 5-phospho-alpha-D-ribose 1-diphosphate + anthranilate. It functions in the pathway amino-acid biosynthesis; L-tryptophan biosynthesis; L-tryptophan from chorismate: step 2/5. Functionally, catalyzes the transfer of the phosphoribosyl group of 5-phosphorylribose-1-pyrophosphate (PRPP) to anthranilate to yield N-(5'-phosphoribosyl)-anthranilate (PRA). This Burkholderia cenocepacia (strain ATCC BAA-245 / DSM 16553 / LMG 16656 / NCTC 13227 / J2315 / CF5610) (Burkholderia cepacia (strain J2315)) protein is Anthranilate phosphoribosyltransferase.